Consider the following 320-residue polypeptide: PUP1 protein homolog (320 aa).

A run of 2 helical transmembrane segments spans residues 66 to 85 (MWGGWLGFSAVFLTPFAYRY) and 100 to 119 (FVLGVMALFFATNFAGRSMY). A disordered region spans residues 205-320 (GGVFNGSPFM…QSGRYGGNRS (116 aa)). Phosphoserine is present on Ser230. Positions 253–266 (GDNSSSSSWENIRN) are enriched in polar residues. Over residues 267–284 (TSRDQSQESDASVDHESD) the composition is skewed to basic and acidic residues.

The protein belongs to the PUP1 family.

It localises to the mitochondrion membrane. The chain is PUP1 protein homolog from Saccharomyces cerevisiae (strain ATCC 204508 / S288c) (Baker's yeast).